The primary structure comprises 264 residues: S-adenosylmethionine decarboxylase proenzyme (264 aa).

The Schiff-base intermediate with substrate; via pyruvic acid role is filled by Ser-113. Ser-113 carries the pyruvic acid (Ser); by autocatalysis modification. His-118 (proton acceptor; for processing activity) is an active-site residue. Residue Cys-141 is the Proton donor; for catalytic activity of the active site.

This sequence belongs to the prokaryotic AdoMetDC family. Type 2 subfamily. As to quaternary structure, heterooctamer of four alpha and four beta chains arranged as a tetramer of alpha/beta heterodimers. The cofactor is pyruvate. In terms of processing, is synthesized initially as an inactive proenzyme. Formation of the active enzyme involves a self-maturation process in which the active site pyruvoyl group is generated from an internal serine residue via an autocatalytic post-translational modification. Two non-identical subunits are generated from the proenzyme in this reaction, and the pyruvate is formed at the N-terminus of the alpha chain, which is derived from the carboxyl end of the proenzyme. The post-translation cleavage follows an unusual pathway, termed non-hydrolytic serinolysis, in which the side chain hydroxyl group of the serine supplies its oxygen atom to form the C-terminus of the beta chain, while the remainder of the serine residue undergoes an oxidative deamination to produce ammonia and the pyruvoyl group blocking the N-terminus of the alpha chain.

The catalysed reaction is S-adenosyl-L-methionine + H(+) = S-adenosyl 3-(methylsulfanyl)propylamine + CO2. It functions in the pathway amine and polyamine biosynthesis; S-adenosylmethioninamine biosynthesis; S-adenosylmethioninamine from S-adenosyl-L-methionine: step 1/1. Its function is as follows. Catalyzes the decarboxylation of S-adenosylmethionine to S-adenosylmethioninamine (dcAdoMet), the propylamine donor required for the synthesis of the polyamines spermine and spermidine from the diamine putrescine. This Pseudomonas syringae pv. syringae (strain B728a) protein is S-adenosylmethionine decarboxylase proenzyme.